The primary structure comprises 100 residues: C-X-C motif chemokine 3 (100 aa).

An N-terminal signal peptide occupies residues 1 to 31; it reads MAPPTCRLLSAALVLLLLLATNHQATGAVVA. 2 cysteine pairs are disulfide-bonded: Cys36-Cys62 and Cys38-Cys78.

This sequence belongs to the intercrine alpha (chemokine CxC) family.

The protein resides in the secreted. In terms of biological role, ligand for CXCR2. Has chemotactic activity for neutrophils. May play a role in inflammation and exert its effects on endothelial cells in an autocrine fashion. The polypeptide is C-X-C motif chemokine 3 (Mus musculus (Mouse)).